The sequence spans 507 residues: ATP synthase subunit alpha (507 aa).

Residue 168–175 coordinates ATP; that stretch reads GDRQTGKT.

This sequence belongs to the ATPase alpha/beta chains family. In terms of assembly, F-type ATPases have 2 components, CF(1) - the catalytic core - and CF(0) - the membrane proton channel. CF(1) has five subunits: alpha(3), beta(3), gamma(1), delta(1), epsilon(1). CF(0) has three main subunits: a(1), b(2) and c(9-12). The alpha and beta chains form an alternating ring which encloses part of the gamma chain. CF(1) is attached to CF(0) by a central stalk formed by the gamma and epsilon chains, while a peripheral stalk is formed by the delta and b chains.

It localises to the cell membrane. It catalyses the reaction ATP + H2O + 4 H(+)(in) = ADP + phosphate + 5 H(+)(out). In terms of biological role, produces ATP from ADP in the presence of a proton gradient across the membrane. The alpha chain is a regulatory subunit. The protein is ATP synthase subunit alpha of Mesomycoplasma hyopneumoniae (strain 232) (Mycoplasma hyopneumoniae).